A 249-amino-acid chain; its full sequence is Metallo-beta-lactamase type 2 (249 aa).

Residues 1–22 form the signal peptide; it reads MLKKIKISLILALGLTSLQAFG. Zn(2+)-binding residues include His98, His100, Asp102, His161, and Cys180. A substrate-binding site is contributed by Lys183. Zn(2+) is bound at residue His222.

This sequence belongs to the metallo-beta-lactamase superfamily. Class-B beta-lactamase family. As to quaternary structure, monomer. Zn(2+) serves as cofactor.

The protein localises to the periplasm. It catalyses the reaction a beta-lactam + H2O = a substituted beta-amino acid. Inhibited by chelating agents such as EDTA, 1-10 phenanthroline and pyridine-2,6-dicarboxylic acid. Confers resistance to the different beta-lactams antibiotics (penicillin, cephalosporin and carbapenem) via the hydrolysis of the beta-lactam ring. This chain is Metallo-beta-lactamase type 2 (blaB1), found in Elizabethkingia meningoseptica (Chryseobacterium meningosepticum).